We begin with the raw amino-acid sequence, 293 residues long: Probable flavonol synthase 6 (293 aa).

Residues Lys156–Pro253 form the Fe2OG dioxygenase domain. Residue Asn164 to Tyr166 coordinates 2-oxoglutarate. Fe cation-binding residues include His178, Asp180, and His234. Arg244 to Ser246 contributes to the 2-oxoglutarate binding site.

The protein belongs to the iron/ascorbate-dependent oxidoreductase family. Fe(2+) is required as a cofactor.

It catalyses the reaction a (2R,3R)-dihydroflavonol + 2-oxoglutarate + O2 = a flavonol + succinate + CO2 + H2O. Its pathway is secondary metabolite biosynthesis; flavonoid biosynthesis. The sequence is that of Probable flavonol synthase 6 (FLS6) from Arabidopsis thaliana (Mouse-ear cress).